We begin with the raw amino-acid sequence, 203 residues long: MHKDSNIIDELIFSFAQLPGLGNRSARRIVLYLMQDKEVRIKNLNNQLTSVLNNIMECDYCGNLDIVSICNICKHSERDSSTIAVVESVADLWALERSKVFKGWYHVLGKTLSAVSGNDAVNSLKLPKLLNRIREYKVQEIILATNSTIDGQMTAFFVIDYLKDENLKISKLASGIPLGGELDYLDEGTLLAAFKARQSHDLL.

The C4-type zinc finger occupies Cys58–Cys73. The region spanning Ser81–Pro177 is the Toprim domain.

It belongs to the RecR family.

May play a role in DNA repair. It seems to be involved in an RecBC-independent recombinational process of DNA repair. It may act with RecF and RecO. The sequence is that of Recombination protein RecR from Orientia tsutsugamushi (strain Ikeda) (Rickettsia tsutsugamushi).